The following is a 453-amino-acid chain: UPF0210 protein Mbur_0828 (453 aa).

This sequence belongs to the UPF0210 family.

This chain is UPF0210 protein Mbur_0828, found in Methanococcoides burtonii (strain DSM 6242 / NBRC 107633 / OCM 468 / ACE-M).